The primary structure comprises 459 residues: Argininosuccinate lyase (459 aa).

The protein belongs to the lyase 1 family. Argininosuccinate lyase subfamily.

It is found in the cytoplasm. It carries out the reaction 2-(N(omega)-L-arginino)succinate = fumarate + L-arginine. It participates in amino-acid biosynthesis; L-arginine biosynthesis; L-arginine from L-ornithine and carbamoyl phosphate: step 3/3. This chain is Argininosuccinate lyase, found in Staphylococcus aureus (strain bovine RF122 / ET3-1).